We begin with the raw amino-acid sequence, 358 residues long: C-X-C chemokine receptor type 4-B (358 aa).

An important for chemokine binding and signaling region spans residues 1-25 (MDGFSGGIDINIFDGNSTENGSGDF). The Extracellular segment spans residues 1–44 (MDGFSGGIDINIFDGNSTENGSGDFEDFIEPCFMQENSDFNRIF). Residues N16 and N20 are each glycosylated (N-linked (GlcNAc...) asparagine). Disulfide bonds link C32/C281 and C113/C190. The helical transmembrane segment at 45–67 (LPTIYSFIFLLGIIGNGLVVVVM) threads the bilayer. Residues 68–81 (GYQKKSRTMTDKYR) are Cytoplasmic-facing. A helical membrane pass occupies residues 82–103 (LHLSVADLLFVFTLPFWSVDAA). A chemokine binding region spans residues 98–101 (WSVD). Over 104 to 114 (IGWYFKEFLCK) the chain is Extracellular. The helical transmembrane segment at 115–134 (AVHVIYTVNLYSSVLILAFI) threads the bilayer. The chemokine binding stretch occupies residues 117-121 (HVIYT). Residues 135 to 158 (SLDRYLAIVHATNSQGSRKMLADK) are Cytoplasmic-facing. The tract at residues 139–151 (YLAIVHATNSQGS) is involved in dimerization; when bound to chemokine. The helical transmembrane segment at 159–178 (VVYAGVWLPALLLTVPDLVF) threads the bilayer. Over 179–202 (ASVSNENGQFVCDRIYPIDNRETW) the chain is Extracellular. Residues 190 to 194 (CDRIY) are chemokine binding, important for signaling. A helical membrane pass occupies residues 203–223 (TVGFRFLHITVGLILPGLIIL). The Cytoplasmic segment spans residues 224 to 248 (VCYCVIISKLSHSKGHQKRKALKTT). A helical membrane pass occupies residues 249–268 (VILILAFFACWLPYYVCLTT). Over 269 to 289 (DTFMMLGLVKADCIWENTLHK) the chain is Extracellular. Residues 290–309 (AISITEALAFFHCCLNPILY) form a helical membrane-spanning segment. Residues 310-358 (AFLGAKFKKSAQNAFTSVSRGSSLKILSKKRAGLSSVSTESESSSFHSS) lie on the Cytoplasmic side of the membrane. A disordered region spans residues 338–358 (KKRAGLSSVSTESESSSFHSS). The span at 344-358 (SSVSTESESSSFHSS) shows a compositional bias: low complexity.

This sequence belongs to the G-protein coupled receptor 1 family. In terms of assembly, monomer. Can form dimers. In terms of processing, sulfation is required for efficient binding of cxcl12/sdf-1alpha and promotes its dimerization. O- and N-glycosylated.

It localises to the cell membrane. It is found in the cytoplasm. Its subcellular location is the nucleus. The protein resides in the early endosome. The protein localises to the late endosome. It localises to the lysosome. In terms of biological role, receptor for the C-X-C chemokine cxcl12/sdf-1. Transduces a signal by increasing the intracellular level of calcium ions. Signaling with cxcl12/sdf-1 mediates the directional movement of mesodermal cells during gastrulation. May play a role in the migration of embryonic presumptive primordial germ cells (pPGCs). May also be involved in regulating migration of hematopoietic stem cells into the larval liver. In Xenopus laevis (African clawed frog), this protein is C-X-C chemokine receptor type 4-B (cxcr4-b).